The chain runs to 306 residues: tRNA pseudouridine synthase B (306 aa).

The active-site Nucleophile is D51.

Belongs to the pseudouridine synthase TruB family. Type 1 subfamily.

It carries out the reaction uridine(55) in tRNA = pseudouridine(55) in tRNA. Functionally, responsible for synthesis of pseudouridine from uracil-55 in the psi GC loop of transfer RNAs. This chain is tRNA pseudouridine synthase B, found in Nocardia farcinica (strain IFM 10152).